A 39-amino-acid chain; its full sequence is Bacteriocin lactococcin-G subunit alpha (39 aa).

As to quaternary structure, bacteriocin activity requires interaction of alpha and beta peptides in a molar ratio of 7:1 or 8:1 respectively.

Its function is as follows. Kills Lactococci. The sequence is that of Bacteriocin lactococcin-G subunit alpha from Lactococcus lactis subsp. lactis (Streptococcus lactis).